The chain runs to 398 residues: Phosphoglycerate kinase (398 aa).

Substrate is bound by residues 23–25 (DFN), R38, 61–64 (HMGK), R122, and R155. Residues K206, G297, E328, and 354 to 357 (GGDS) each bind ATP.

It belongs to the phosphoglycerate kinase family. As to quaternary structure, monomer.

The protein localises to the cytoplasm. The catalysed reaction is (2R)-3-phosphoglycerate + ATP = (2R)-3-phospho-glyceroyl phosphate + ADP. It functions in the pathway carbohydrate degradation; glycolysis; pyruvate from D-glyceraldehyde 3-phosphate: step 2/5. The sequence is that of Phosphoglycerate kinase from Clostridium botulinum (strain Loch Maree / Type A3).